The sequence spans 208 residues: Uracil phosphoribosyltransferase (208 aa).

5-phospho-alpha-D-ribose 1-diphosphate-binding positions include Arg78, Arg103, and 130 to 138; that span reads DPMLATGGS. Uracil is bound by residues Ile193 and 198-200; that span reads GDA. Asp199 is a binding site for 5-phospho-alpha-D-ribose 1-diphosphate.

The protein belongs to the UPRTase family. The cofactor is Mg(2+).

It carries out the reaction UMP + diphosphate = 5-phospho-alpha-D-ribose 1-diphosphate + uracil. The protein operates within pyrimidine metabolism; UMP biosynthesis via salvage pathway; UMP from uracil: step 1/1. Its activity is regulated as follows. Allosterically activated by GTP. In terms of biological role, catalyzes the conversion of uracil and 5-phospho-alpha-D-ribose 1-diphosphate (PRPP) to UMP and diphosphate. This is Uracil phosphoribosyltransferase from Roseiflexus castenholzii (strain DSM 13941 / HLO8).